Here is a 521-residue protein sequence, read N- to C-terminus: DNA damage-binding protein cmr1 (521 aa).

Residues 36–75 (DKIIPKPAPPKPKRASTPRVKREPVKKEAARPTRQSSRLA) form a disordered region. A compositionally biased stretch (basic and acidic residues) spans 55-66 (VKREPVKKEAAR). WD repeat units follow at residues 183–224 (IVPQ…PKIE), 242–282 (THSR…STEI), 333–373 (LTDH…GKGD), 382–422 (EHES…EWKA), and 490–521 (DGITAVPAVAHFHPTKDWVAGGTASGKLCLWM).

Belongs to the WD repeat DDB2/WDR76 family.

Its function is as follows. DNA-binding protein that binds to both single- and double-stranded DNA. Binds preferentially to UV-damaged DNA. May be involved in DNA-metabolic processes. This is DNA damage-binding protein cmr1 from Neurospora crassa (strain ATCC 24698 / 74-OR23-1A / CBS 708.71 / DSM 1257 / FGSC 987).